The following is a 419-amino-acid chain: Akuammiline synthase 1 (419 aa).

Histidine 151 acts as the Proton acceptor in catalysis. A Nuclear localization signal motif is present at residues 206 to 213 (TRRFVFPA). Aspartate 359 serves as the catalytic Proton acceptor.

Belongs to the plant acyltransferase family. Monomer.

The protein resides in the cytoplasm. The protein localises to the nucleus. It carries out the reaction rhazimol + acetyl-CoA = akuammiline + CoA + H(+). The protein operates within alkaloid biosynthesis. In terms of biological role, acyltransferase involved in the biosynthesis of akuammilan monoterpene indole alkaloids (MIAs) natural products, components with various biological properties such as antidiabetic, antibacterial, anti-inflammatory, anticancer, and antimalarial activities. Catalyzes the conversion of rhazimol to akuammiline. The sequence is that of Akuammiline synthase 1 from Alstonia scholaris (Dogbane).